Reading from the N-terminus, the 444-residue chain is MSHSPARQHLVESSRMDVVDSLLMNGSNITPPCELGLENETLFCLDQPQPSKEWQSALQILLYSIIFLLSVLGNTLVITVLIRNKRMRTVTNIFLLSLAVSDLMLCLFCMPFNLIPNLLKDFIFGSAVCKTTTYFMGTSVSVSTFNLVAISLERYGAICRPLQSRVWQTKSHALKVIAATWCLSFTIMTPYPIYSNLVPFTKNNNQTANMCRFLLPSDAMQQSWQTFLLLILFLLPGIVMVVAYGLISLELYQGIKFDASQKKSAKEKKPSTGSSTRYEDSDGCYLQKSRPPRKLELQQLSSGSGGSRLNRIRSSSSAANLIAKKRVIRMLIVIVVLFFLCWMPIFSANAWRAYDTVSAEKHLSGTPISFILLLSYTSSCVNPIIYCFMNKRFRLGFMATFPCCPNPGPPGVRGEVGEEEDGRTIRALLSRYSYSHMSTSAPPP.

Topologically, residues 1-56 (MSHSPARQHLVESSRMDVVDSLLMNGSNITPPCELGLENETLFCLDQPQPSKEWQS) are extracellular. N-linked (GlcNAc...) asparagine glycosylation is found at Asn25 and Asn39. A disulfide bridge links Cys33 with Cys44. Residues 57–82 (ALQILLYSIIFLLSVLGNTLVITVLI) traverse the membrane as a helical segment. The Cytoplasmic portion of the chain corresponds to 83-92 (RNKRMRTVTN). Residues 93–119 (IFLLSLAVSDLMLCLFCMPFNLIPNLL) traverse the membrane as a helical segment. The Extracellular portion of the chain corresponds to 120–130 (KDFIFGSAVCK). Cysteines 129 and 211 form a disulfide. Residues 131–152 (TTTYFMGTSVSVSTFNLVAISL) form a helical membrane-spanning segment. Topologically, residues 153–172 (ERYGAICRPLQSRVWQTKSH) are cytoplasmic. The helical transmembrane segment at 173 to 193 (ALKVIAATWCLSFTIMTPYPI) threads the bilayer. At 194–225 (YSNLVPFTKNNNQTANMCRFLLPSDAMQQSWQ) the chain is on the extracellular side. An N-linked (GlcNAc...) asparagine glycan is attached at Asn205. The helical transmembrane segment at 226 to 249 (TFLLLILFLLPGIVMVVAYGLISL) threads the bilayer. The Cytoplasmic portion of the chain corresponds to 250-329 (ELYQGIKFDA…NLIAKKRVIR (80 aa)). Positions 263-288 (KSAKEKKPSTGSSTRYEDSDGCYLQK) are disordered. Residues 330–350 (MLIVIVVLFFLCWMPIFSANA) traverse the membrane as a helical segment. Residues 351–365 (WRAYDTVSAEKHLSG) lie on the Extracellular side of the membrane. Residues 366–389 (TPISFILLLSYTSSCVNPIIYCFM) form a helical membrane-spanning segment. Topologically, residues 390–444 (NKRFRLGFMATFPCCPNPGPPGVRGEVGEEEDGRTIRALLSRYSYSHMSTSAPPP) are cytoplasmic. A lipid anchor (S-palmitoyl cysteine) is attached at Cys403.

Belongs to the G-protein coupled receptor 1 family. In terms of tissue distribution, pancreas and brain. Also expressed in the gastrointestinal system and vagus nerve.

The protein resides in the cell membrane. Functionally, receptor for cholecystokinin. Mediates pancreatic growth and enzyme secretion, smooth muscle contraction of the gall bladder and stomach. Has a 1000-fold higher affinity for CCK rather than for gastrin. It modulates feeding and dopamine-induced behavior in the central and peripheral nervous system. This receptor mediates its action by association with G proteins that activate a phosphatidylinositol-calcium second messenger system. This Rattus norvegicus (Rat) protein is Cholecystokinin receptor type A (Cckar).